Consider the following 597-residue polypeptide: uncharacterized protein (597 aa).

Disordered regions lie at residues 165 to 197 and 278 to 344; these read NSRA…IFSK and ERSS…RGTL. The span at 169 to 178 shows a compositional bias: pro residues; it reads VPPPAPPNPP. A compositionally biased stretch (basic and acidic residues) spans 179–189; the sequence is KMEKHMSHDTS. A compositionally biased stretch (low complexity) spans 293–313; sequence STEVSITSSSPSPSSSSSTST. Residues 402–465 enclose the SAM domain; sequence WSLDDVLLWL…LDDLSKIIEN (64 aa). The segment at 576-597 is disordered; the sequence is EESQQKESSSSGISSSPQTPTE. A compositionally biased stretch (low complexity) spans 581–597; the sequence is KESSSSGISSSPQTPTE.

This is an uncharacterized protein from Caenorhabditis elegans.